Consider the following 190-residue polypeptide: dTTP/UTP pyrophosphatase (190 aa).

The Proton acceptor role is filled by Asp71.

Belongs to the Maf family. YhdE subfamily. A divalent metal cation serves as cofactor.

It localises to the cytoplasm. It catalyses the reaction dTTP + H2O = dTMP + diphosphate + H(+). The catalysed reaction is UTP + H2O = UMP + diphosphate + H(+). Functionally, nucleoside triphosphate pyrophosphatase that hydrolyzes dTTP and UTP. May have a dual role in cell division arrest and in preventing the incorporation of modified nucleotides into cellular nucleic acids. This is dTTP/UTP pyrophosphatase from Xanthomonas euvesicatoria pv. vesicatoria (strain 85-10) (Xanthomonas campestris pv. vesicatoria).